The following is a 220-amino-acid chain: UPF0319 protein Ent638_1476 (220 aa).

The signal sequence occupies residues 1–20 (MKTGIVSAVLALVMPVCVYA).

It belongs to the UPF0319 family.

The polypeptide is UPF0319 protein Ent638_1476 (Enterobacter sp. (strain 638)).